The following is a 137-amino-acid chain: Gonadotropin subunit beta-1 (137 aa).

Positions 1 to 24 (MYCTHLMTLQLVVMAMLWVTPVRA) are cleaved as a signal peptide. 5 disulfide bridges follow: C32-C78, C46-C93, C55-C108, C59-C110, and C113-C120. The N-linked (GlcNAc...) asparagine glycan is linked to N36.

This sequence belongs to the glycoprotein hormones subunit beta family. In terms of assembly, heterodimer of an alpha and a beta chain.

It localises to the secreted. In terms of biological role, involved in gametogenesis and steroidogenesis. This Oncorhynchus keta (Chum salmon) protein is Gonadotropin subunit beta-1 (cgba).